The chain runs to 1060 residues: Desmoglein-1-beta (1060 aa).

The N-terminal stretch at 1–23 (MDWHSFRIAALLLTSLVVLEVNS) is a signal peptide. Positions 24 to 49 (EFQIQVRDHNAKNGTIKWHSIRRQKR) are excised as a propeptide. Cadherin domains follow at residues 50-157 (EWIK…PPVF), 158-269 (SMTT…IPYL), 270-389 (EQSS…RPGS), and 386-493 (RPGS…PGSD). The Extracellular segment spans residues 50-567 (EWIKFAAACR…ITEDNVHFGP (518 aa)). N110 carries N-linked (GlcNAc...) (high mannose) asparagine glycosylation. N-linked (GlcNAc...) asparagine glycosylation occurs at N180. The disordered stretch occupies residues 490-560 (PGSDGGGSSS…PEPEPFDITE (71 aa)). Positions 492-503 (SDGGGSSSGSGG) are enriched in gly residues. Positions 510–519 (NGYQGTSTVG) are enriched in polar residues. Residues 525-537 (GSGGVTSSGGGSG) show a composition bias toward gly residues. A compositionally biased stretch (acidic residues) spans 549–560 (DEPEPEPFDITE). Residues 568–588 (AGIGLLIMGFLVLGLVPFLLI) traverse the membrane as a helical segment. Residues 589–1060 (CCDCGGAPGG…TKYSTVQYSK (472 aa)) lie on the Cytoplasmic side of the membrane. Low complexity predominate over residues 792–801 (PDPDSSWPPQ). The segment at 792–811 (PDPDSSWPPQSTEPMCPQST) is disordered. Desmoglein repeat repeat units follow at residues 835-861 (AYPS…TVRE), 862-891 (SYAT…ERVV), 892-921 (GPVP…ERVI), 922-949 (APGS…ERVI), and 950-978 (QPTS…ERVV).

Interacts with DSC3; there is evidence to suggest that the interaction promotes cell-cell adhesion of keratinocytes. Expressed in epidermis.

The protein localises to the cell membrane. The protein resides in the cell junction. Its subcellular location is the desmosome. It is found in the cytoplasm. It localises to the nucleus. In terms of biological role, component of intercellular desmosome junctions. Involved in the interaction of plaque proteins and intermediate filaments mediating cell-cell adhesion. The sequence is that of Desmoglein-1-beta (Dsg1b) from Mus musculus (Mouse).